The sequence spans 421 residues: MNKRSVIIAGIVASLLGLALGANFYFMYYLSAEEGHLASVRALENMIRHKMRHLKPNYLNRNPRFFMFRNKLLKNYKAAPYENASVLWDIANWWPHENEVYPLYDSSMGQLLETLRREPITRVSNLGRGTQLKLLVRLSHQQKVIFKPQWYPREEVIDGMIYSGKDRHTAEVYAFYLGAVLDFRWTPIVVGRVVNLKKEIYAKGDPELQQTINIETDEDGREKYCLFGKCHYCNEEETVCGDERHNIEGVLIYIVPGTLAKRRSPWQRTYKDDKRAPWEDDMTYCKSLKNKMETIRLLDLIDASIFDYLIQNGDRHHYETREERVVLIDNGKAFGNPNKDHLDILAPLYQCCLLRKSTWDRLQVFSGGVLTEIIDRLSKQDALYPLITDKHKKGVERRLLVVYAVVEHCMDIEGDKMFKTL.

The N-terminal stretch at 1-21 (MNKRSVIIAGIVASLLGLALG) is a signal peptide. Asn-83 carries an N-linked (GlcNAc...) asparagine glycan. ATP-binding residues include Gln-131 and Lys-147. Asp-166 serves as a coordination point for Mn(2+). 2 cysteine pairs are disulfide-bonded: Cys-225–Cys-240 and Cys-230–Cys-233. An ATP-binding site is contributed by 252-255 (IYIV). 2 disulfides stabilise this stretch: Cys-285–Cys-351 and Cys-352–Cys-409. Asp-314 is an active-site residue. The ATP site is built by Glu-319 and Asp-329. Asp-329 is a binding site for Mn(2+).

The protein belongs to the FAM20 family. Mn(2+) serves as cofactor.

The protein resides in the golgi apparatus. The protein localises to the endoplasmic reticulum. It catalyses the reaction 3-O-(beta-D-galactosyl-(1-&gt;3)-beta-D-galactosyl-(1-&gt;4)-beta-D-xylosyl)-L-seryl-[protein] + ATP = 3-O-(beta-D-galactosyl-(1-&gt;3)-beta-D-galactosyl-(1-&gt;4)-beta-D-2-O-phosphoxylosyl)-L-seryl-[protein] + ADP + H(+). In terms of biological role, kylose kinase that mediates the 2-O-phosphorylation of xylose in the glycosaminoglycan-protein linkage region of proteoglycans. The chain is Glycosaminoglycan xylosylkinase homolog from Drosophila melanogaster (Fruit fly).